A 134-amino-acid polypeptide reads, in one-letter code: Protein LctB (134 aa).

In Bacillus caldotenax, this protein is Protein LctB (lctB).